The following is a 447-amino-acid chain: Adenylosuccinate synthetase (447 aa).

GTP is bound by residues 35–41 and 63–65; these read GDEGKGK and GHT. The Proton acceptor role is filled by Asp-36. 2 residues coordinate Mg(2+): Asp-36 and Gly-63. IMP-binding positions include 36 to 39, 61 to 64, Thr-153, Arg-167, Asn-245, Thr-260, and Arg-324; these read DEGK and NAGH. The Proton donor role is filled by His-64. Substrate is bound at residue 320-326; the sequence is VTTKRKR. Residues Arg-326, 352–354, and 435–437 contribute to the GTP site; these read KLD and GVG.

Belongs to the adenylosuccinate synthetase family. Homodimer. Mg(2+) is required as a cofactor.

It localises to the cytoplasm. The enzyme catalyses IMP + L-aspartate + GTP = N(6)-(1,2-dicarboxyethyl)-AMP + GDP + phosphate + 2 H(+). It functions in the pathway purine metabolism; AMP biosynthesis via de novo pathway; AMP from IMP: step 1/2. Its function is as follows. Plays an important role in the de novo pathway and in the salvage pathway of purine nucleotide biosynthesis. Catalyzes the first committed step in the biosynthesis of AMP from IMP. The sequence is that of Adenylosuccinate synthetase from Drosophila erecta (Fruit fly).